A 287-amino-acid polypeptide reads, in one-letter code: N-acetylmannosamine kinase (287 aa).

ATP is bound by residues 5 to 12 (AIDIGGTK) and 131 to 138 (GVGGGIII). His155, Cys165, Cys167, and Cys172 together coordinate Zn(2+).

Belongs to the ROK (NagC/XylR) family. NanK subfamily. Homodimer.

It carries out the reaction an N-acyl-D-mannosamine + ATP = an N-acyl-D-mannosamine 6-phosphate + ADP + H(+). It functions in the pathway amino-sugar metabolism; N-acetylneuraminate degradation; D-fructose 6-phosphate from N-acetylneuraminate: step 2/5. In terms of biological role, catalyzes the phosphorylation of N-acetylmannosamine (ManNAc) to ManNAc-6-P. This Vibrio cholerae serotype O1 (strain ATCC 39541 / Classical Ogawa 395 / O395) protein is N-acetylmannosamine kinase.